The sequence spans 348 residues: WW domain binding protein 1-like (348 aa).

Residues 42–62 (LWWFWLVWTVVIILSCCCVCH) traverse the membrane as a helical segment. 2 disordered regions span residues 111–253 (VVNR…RRFT) and 306–348 (CLSS…GSPS). A compositionally biased stretch (pro residues) spans 134–155 (LPPPPQGGPPGGSPPGADPPPQ). Positions 156–177 (GSQGAQSSPLSGPSRSSTRPPS) are enriched in low complexity. A Phosphoserine modification is found at S177. The segment covering 220–234 (SECKEELLKDSRSER) has biased composition (basic and acidic residues). Residues 331–348 (NTINEQDSPNSQHSGSPS) are compositionally biased toward polar residues.

The protein localises to the membrane. The protein is WW domain binding protein 1-like (Wbp1l) of Mus musculus (Mouse).